We begin with the raw amino-acid sequence, 453 residues long: F-box protein SKIP14 (453 aa).

Positions 34–104 (RKNTGGDASS…NRQQLFAGLS (71 aa)) constitute an F-box; degenerate domain.

As to quaternary structure, part of a SCF (ASK-cullin-F-box) protein ligase complex. Interacts with CUL1, SKP1A/ASK1 and SPK1B/ASK2.

Its pathway is protein modification; protein ubiquitination. Its function is as follows. Component of SCF(ASK-cullin-F-box) E3 ubiquitin ligase complexes, which may mediate the ubiquitination and subsequent proteasomal degradation of target proteins. This Arabidopsis thaliana (Mouse-ear cress) protein is F-box protein SKIP14 (SKIP14).